Here is a 261-residue protein sequence, read N- to C-terminus: UPF0246 protein AZOSEA34360 (261 aa).

This sequence belongs to the UPF0246 family.

The polypeptide is UPF0246 protein AZOSEA34360 (Aromatoleum aromaticum (strain DSM 19018 / LMG 30748 / EbN1) (Azoarcus sp. (strain EbN1))).